The sequence spans 196 residues: Carnitine operon protein CaiE (196 aa).

The tract at residues 173–196 is disordered; the sequence is TQPLRQMEENRPRLQGTTDVTPKR. Polar residues predominate over residues 187 to 196; it reads QGTTDVTPKR.

It belongs to the transferase hexapeptide repeat family.

Its pathway is amine and polyamine metabolism; carnitine metabolism. Functionally, overproduction of CaiE stimulates the activity of CaiB and CaiD. The protein is Carnitine operon protein CaiE of Escherichia coli O139:H28 (strain E24377A / ETEC).